The chain runs to 319 residues: L-lactate dehydrogenase (319 aa).

NAD(+) is bound by residues Val17, Asp38, Lys43, Tyr69, and 83 to 84 (GA). The substrate site is built by Gln86 and Arg92. Residues Thr105, 122 to 124 (ATN), and Ser147 each bind NAD(+). 124–127 (NPVD) is a substrate binding site. 152-155 (DTAR) contacts substrate. The beta-D-fructose 1,6-bisphosphate site is built by Arg157 and His172. Catalysis depends on His179, which acts as the Proton acceptor. Phosphotyrosine is present on Tyr224. Residue Thr233 participates in substrate binding.

Belongs to the LDH/MDH superfamily. LDH family. Homotetramer.

It is found in the cytoplasm. It carries out the reaction (S)-lactate + NAD(+) = pyruvate + NADH + H(+). The protein operates within fermentation; pyruvate fermentation to lactate; (S)-lactate from pyruvate: step 1/1. With respect to regulation, allosterically activated by fructose 1,6-bisphosphate (FBP). In terms of biological role, catalyzes the conversion of lactate to pyruvate. This chain is L-lactate dehydrogenase, found in Geobacillus sp. (strain WCH70).